A 274-amino-acid polypeptide reads, in one-letter code: Nitrogenase iron protein (274 aa).

8–15 (GKGGIGKS) is an ATP binding site. Position 94 (cysteine 94) interacts with [4Fe-4S] cluster. At arginine 97 the chain carries ADP-ribosylarginine; by dinitrogenase reductase ADP-ribosyltransferase. Cysteine 129 contributes to the [4Fe-4S] cluster binding site.

The protein belongs to the NifH/BchL/ChlL family. As to quaternary structure, homodimer. Requires [4Fe-4S] cluster as cofactor. Post-translationally, the reversible ADP-ribosylation of Arg-97 inactivates the nitrogenase reductase and regulates nitrogenase activity.

The catalysed reaction is N2 + 8 reduced [2Fe-2S]-[ferredoxin] + 16 ATP + 16 H2O = H2 + 8 oxidized [2Fe-2S]-[ferredoxin] + 2 NH4(+) + 16 ADP + 16 phosphate + 6 H(+). In terms of biological role, the key enzymatic reactions in nitrogen fixation are catalyzed by the nitrogenase complex, which has 2 components: the iron protein and the molybdenum-iron protein. The sequence is that of Nitrogenase iron protein from Methanocella arvoryzae (strain DSM 22066 / NBRC 105507 / MRE50).